The chain runs to 203 residues: Large ribosomal subunit protein uL18 (203 aa).

Belongs to the universal ribosomal protein uL18 family. In terms of assembly, part of the 50S ribosomal subunit. Contacts the 5S and 23S rRNAs.

In terms of biological role, this is one of the proteins that bind and probably mediate the attachment of the 5S RNA into the large ribosomal subunit, where it forms part of the central protuberance. This Pyrococcus horikoshii (strain ATCC 700860 / DSM 12428 / JCM 9974 / NBRC 100139 / OT-3) protein is Large ribosomal subunit protein uL18.